A 1178-amino-acid polypeptide reads, in one-letter code: Phytochrome B (1178 aa).

Positions Met-1–Ser-15 are enriched in polar residues. A disordered region spans residues Met-1–Thr-58. Basic residues predominate over residues His-23 to Ser-32. Gly residues predominate over residues Ala-42–Thr-55. The 183-residue stretch at Asp-267–Leu-449 folds into the GAF domain. Residue Cys-372 participates in phytochromobilin binding. PAS domains follow at residues Val-668–Glu-739 and Asp-802–Ile-873. Residues Tyr-950 to Arg-1170 form the Histidine kinase domain.

Belongs to the phytochrome family. Homodimer. In terms of processing, contains one covalently linked phytochromobilin chromophore.

Functionally, regulatory photoreceptor which exists in two forms that are reversibly interconvertible by light: the Pr form that absorbs maximally in the red region of the spectrum and the Pfr form that absorbs maximally in the far-red region. Photoconversion of Pr to Pfr induces an array of morphogenic responses, whereas reconversion of Pfr to Pr cancels the induction of those responses. Pfr controls the expression of a number of nuclear genes including those encoding the small subunit of ribulose-bisphosphate carboxylase, chlorophyll A/B binding protein, protochlorophyllide reductase, rRNA, etc. It also controls the expression of its own gene(s) in a negative feedback fashion. This chain is Phytochrome B (PHYB), found in Sorghum bicolor (Sorghum).